A 365-amino-acid chain; its full sequence is 4-hydroxy-3-methylbut-2-en-1-yl diphosphate synthase (flavodoxin) (365 aa).

[4Fe-4S] cluster contacts are provided by Cys-270, Cys-273, Cys-305, and Glu-312.

It belongs to the IspG family. It depends on [4Fe-4S] cluster as a cofactor.

The enzyme catalyses (2E)-4-hydroxy-3-methylbut-2-enyl diphosphate + 2 oxidized [2Fe-2S]-[ferredoxin] + H2O = 2-C-methyl-D-erythritol 2,4-cyclic diphosphate + 2 reduced [2Fe-2S]-[ferredoxin] + H(+). It catalyses the reaction (2E)-4-hydroxy-3-methylbut-2-enyl diphosphate + oxidized [flavodoxin] + H2O + 2 H(+) = 2-C-methyl-D-erythritol 2,4-cyclic diphosphate + reduced [flavodoxin]. It participates in isoprenoid biosynthesis; isopentenyl diphosphate biosynthesis via DXP pathway; isopentenyl diphosphate from 1-deoxy-D-xylulose 5-phosphate: step 5/6. Its function is as follows. Converts 2C-methyl-D-erythritol 2,4-cyclodiphosphate (ME-2,4cPP) into 1-hydroxy-2-methyl-2-(E)-butenyl 4-diphosphate. Involved in density-dependent regulation of 2'-N-acetyltransferase. The polypeptide is 4-hydroxy-3-methylbut-2-en-1-yl diphosphate synthase (flavodoxin) (Providencia stuartii).